A 152-amino-acid polypeptide reads, in one-letter code: Large ribosomal subunit protein uL15 (152 aa).

The tract at residues 1-57 is disordered; that stretch reads MTSTLNTLKSNSGSRKKKLRKGRGIAAGQGASCGFGMRGQKSRSGRPTRPGFEGGQM. Basic residues predominate over residues 14-23; sequence SRKKKLRKGR. The span at 25–37 shows a compositional bias: gly residues; the sequence is IAAGQGASCGFGM.

It belongs to the universal ribosomal protein uL15 family. Part of the 50S ribosomal subunit.

Its function is as follows. Binds to the 23S rRNA. The sequence is that of Large ribosomal subunit protein uL15 from Prochlorococcus marinus (strain MIT 9215).